The primary structure comprises 330 residues: Beta-ketoacyl-[acyl-carrier-protein] synthase III (330 aa).

Active-site residues include cysteine 115 and histidine 255. Positions 256–260 are ACP-binding; sequence QANFR. The active site involves asparagine 285.

This sequence belongs to the thiolase-like superfamily. FabH family. Homodimer.

Its subcellular location is the cytoplasm. The enzyme catalyses malonyl-[ACP] + acetyl-CoA + H(+) = 3-oxobutanoyl-[ACP] + CO2 + CoA. Its pathway is lipid metabolism; fatty acid biosynthesis. In terms of biological role, catalyzes the condensation reaction of fatty acid synthesis by the addition to an acyl acceptor of two carbons from malonyl-ACP. Catalyzes the first condensation reaction which initiates fatty acid synthesis and may therefore play a role in governing the total rate of fatty acid production. Possesses both acetoacetyl-ACP synthase and acetyl transacylase activities. Its substrate specificity determines the biosynthesis of branched-chain and/or straight-chain of fatty acids. This is Beta-ketoacyl-[acyl-carrier-protein] synthase III from Helicobacter pylori (strain G27).